Consider the following 163-residue polypeptide: R-phycoerythrin alpha chain (163 aa).

(2R,3E)-phycoerythrobilin contacts are provided by cysteine 82 and cysteine 139.

The protein belongs to the phycobiliprotein family. In terms of assembly, heterodimer of an alpha and a beta chain. Contains two covalently linked bilin chromophores.

It is found in the plastid. The protein resides in the chloroplast thylakoid membrane. Its function is as follows. Light-harvesting photosynthetic bile pigment-protein from the phycobiliprotein complex. In Aglaothamnion neglectum (Red alga), this protein is R-phycoerythrin alpha chain (cpeA).